The chain runs to 210 residues: N-(5'-phosphoribosyl)anthranilate isomerase (210 aa).

The protein belongs to the TrpF family.

The enzyme catalyses N-(5-phospho-beta-D-ribosyl)anthranilate = 1-(2-carboxyphenylamino)-1-deoxy-D-ribulose 5-phosphate. It participates in amino-acid biosynthesis; L-tryptophan biosynthesis; L-tryptophan from chorismate: step 3/5. This Pseudomonas fluorescens (strain ATCC BAA-477 / NRRL B-23932 / Pf-5) protein is N-(5'-phosphoribosyl)anthranilate isomerase.